The following is an 85-amino-acid chain: UPF0297 protein CLL_A1175 (85 aa).

This sequence belongs to the UPF0297 family.

The chain is UPF0297 protein CLL_A1175 from Clostridium botulinum (strain Eklund 17B / Type B).